The primary structure comprises 349 residues: Phenylalanine--tRNA ligase alpha subunit (349 aa).

E258 contributes to the Mg(2+) binding site.

Belongs to the class-II aminoacyl-tRNA synthetase family. Phe-tRNA synthetase alpha subunit type 1 subfamily. As to quaternary structure, tetramer of two alpha and two beta subunits. Mg(2+) is required as a cofactor.

Its subcellular location is the cytoplasm. The catalysed reaction is tRNA(Phe) + L-phenylalanine + ATP = L-phenylalanyl-tRNA(Phe) + AMP + diphosphate + H(+). The protein is Phenylalanine--tRNA ligase alpha subunit of Rickettsia bellii (strain RML369-C).